The chain runs to 314 residues: MKSSILASAAILAASLEPVAALSEPLQNILINTDRSPIYRYPTDVTRGIVPIPVHSHNDYWRDIPFYTALTTKLALSAGCISIEADVFLFNDTLYVGHEESALTKERTLQSLYIEPLMNVLKKTNPKSPFVSGPTRHGVFDTSSGQTLYLWIDVKNDGEKAWPHIVKALQPLRDANYLTKIQNNESFVPGPVTVIGTGGTPLSQVVSAADRDYFYDGPLKDLTGFTSLISPIASTSLMEVVGDIKSDSENPLNPTQLEAIRKQIKAAKEKSIGVRYWETPGWPIRLRNELWRTLWKEGVALLNADDVNAAKGYF.

Positions 1 to 21 are cleaved as a signal peptide; sequence MKSSILASAAILAASLEPVAA. 2 N-linked (GlcNAc...) asparagine glycosylation sites follow: asparagine 91 and asparagine 184.

The protein belongs to the AIM6 family.

The protein localises to the secreted. The protein is Altered inheritance of mitochondria protein 6 homolog ARB_06966 of Arthroderma benhamiae (strain ATCC MYA-4681 / CBS 112371) (Trichophyton mentagrophytes).